A 215-amino-acid chain; its full sequence is Cytochrome b6 (215 aa).

The chain crosses the membrane as a helical span at residues 32 to 52 (IFYCLGGITLTCFLVQVATGF). C35 is a heme c binding site. Residues H86 and H100 each coordinate heme b. The next 3 membrane-spanning stretches (helical) occupy residues 90 to 110 (ASMM…TGGF), 116 to 136 (LTWV…VTGY), and 186 to 206 (LHTF…FLMI). H187 and H202 together coordinate heme b.

This sequence belongs to the cytochrome b family. PetB subfamily. The 4 large subunits of the cytochrome b6-f complex are cytochrome b6, subunit IV (17 kDa polypeptide, PetD), cytochrome f and the Rieske protein, while the 4 small subunits are PetG, PetL, PetM and PetN. The complex functions as a dimer. It depends on heme b as a cofactor. Heme c is required as a cofactor.

The protein localises to the plastid. Its subcellular location is the chloroplast thylakoid membrane. Its function is as follows. Component of the cytochrome b6-f complex, which mediates electron transfer between photosystem II (PSII) and photosystem I (PSI), cyclic electron flow around PSI, and state transitions. In Oenothera elata subsp. hookeri (Hooker's evening primrose), this protein is Cytochrome b6.